Here is a 412-residue protein sequence, read N- to C-terminus: MNAEIIAVGTELLLGQIANTNAQFLSEKLASIGINVYYHTVVGDNNKRLQKAIEAAEERADILIFTGGLGPTKDDLTKETIAASLDEALVYDEKALALISNYFKRTGREFTENNKKQALVLNGATVFANDHGMAPGMGVNKNGKVYILLPGPPKEMKPMYVSYVEPFLRNFTTGENIYSRVLRFFGIGESQLEVKVQDLIDGQTNPTIAPLANDGEVTLRLTAKHQNVSEAEKLIQHVEDLILERVGEFFYGYDQEFLHYKAIELLKRKGLTLACAESLTGGLFGNQVTENAGVSSVFKGGVICYHNDVKQHVLRVPEEVLHTDGAVSKECAHYLAENVKDLLKADIGISFTGVAGPDASEQKEPGTVFVGLAIKGEQTAVFPLNLSGSRQQIRERSTKYGFYHLYKKLEEI.

This sequence belongs to the CinA family.

The protein is Putative competence-damage inducible protein of Bacillus cereus (strain G9842).